We begin with the raw amino-acid sequence, 860 residues long: DNA mismatch repair protein MutS (860 aa).

An ATP-binding site is contributed by 607-614 (GPNMSGKS).

This sequence belongs to the DNA mismatch repair MutS family.

In terms of biological role, this protein is involved in the repair of mismatches in DNA. It is possible that it carries out the mismatch recognition step. This protein has a weak ATPase activity. The sequence is that of DNA mismatch repair protein MutS from Listeria welshimeri serovar 6b (strain ATCC 35897 / DSM 20650 / CCUG 15529 / CIP 8149 / NCTC 11857 / SLCC 5334 / V8).